Here is a 402-residue protein sequence, read N- to C-terminus: Putative nickel insertion protein (402 aa).

This sequence belongs to the LarC family.

In Synechococcus elongatus (strain ATCC 33912 / PCC 7942 / FACHB-805) (Anacystis nidulans R2), this protein is Putative nickel insertion protein.